A 688-amino-acid polypeptide reads, in one-letter code: Polyribonucleotide nucleotidyltransferase (688 aa).

2 residues coordinate Mg(2+): D484 and D490. The 60-residue stretch at 550–609 (PTTEIFNVAPDKIVEIIGQGGRVIKEIVEKFEVKIDLNKPSGEVKIMGNKERVLKTKEFI) folds into the KH domain. Residues 626 to 688 (DEVLEAQVKR…NKGKIALDLA (63 aa)) enclose the S1 motif domain.

Belongs to the polyribonucleotide nucleotidyltransferase family. The cofactor is Mg(2+).

The protein localises to the cytoplasm. It catalyses the reaction RNA(n+1) + phosphate = RNA(n) + a ribonucleoside 5'-diphosphate. In terms of biological role, involved in mRNA degradation. Catalyzes the phosphorolysis of single-stranded polyribonucleotides processively in the 3'- to 5'-direction. In Helicobacter pylori (strain P12), this protein is Polyribonucleotide nucleotidyltransferase.